We begin with the raw amino-acid sequence, 430 residues long: MTTIVNVHAREVLDSRGNPTVEVEVILASGTTGRAIVPSGASTGQFEAVELRDGDKQRYLGKGVLTAVRNVNEVIAEAVVGMDATEQVEVDQAMLALDGTPNKSKLGANAILGVSLATARAAAAELGIPLYRHVGGLTARTLPVPMMNIINGGKHADNNVDMQEFMIFPAGAPSFAESLRMGTEVFHALKSVLKSKGYNTAVGDEGGFAPDLKSNEEAILVILEAIEKAGYKPGQDVFLCMDVASSELFQDGKYVLAGEGNKVLSTEQLIDLWDSWTRQYPIVSIEDGVAEDEWEAWVELTRRIGDRVQLVGDDFFVTNTERLARGIGMNAANAILVKVNQIGTLTETLEAVALAHRNGYSSVMSHRSGETEDTTIADLAVALNCGQIKTGAPSRTDRVAKYNQLLRIEEELGDAAIFAGTSVIRGRKQG.

Glutamine 163 is a (2R)-2-phosphoglycerate binding site. Catalysis depends on glutamate 205, which acts as the Proton donor. Positions 242, 286, and 313 each coordinate Mg(2+). Residues lysine 338, arginine 367, serine 368, and lysine 389 each coordinate (2R)-2-phosphoglycerate. The active-site Proton acceptor is the lysine 338.

This sequence belongs to the enolase family. Requires Mg(2+) as cofactor.

It localises to the cytoplasm. The protein resides in the secreted. The protein localises to the cell surface. The enzyme catalyses (2R)-2-phosphoglycerate = phosphoenolpyruvate + H2O. The protein operates within carbohydrate degradation; glycolysis; pyruvate from D-glyceraldehyde 3-phosphate: step 4/5. Functionally, catalyzes the reversible conversion of 2-phosphoglycerate (2-PG) into phosphoenolpyruvate (PEP). It is essential for the degradation of carbohydrates via glycolysis. This is Enolase from Symbiobacterium thermophilum (strain DSM 24528 / JCM 14929 / IAM 14863 / T).